The primary structure comprises 309 residues: SUR7 family protein FMP45 (309 aa).

Residues 1–5 are Cytoplasmic-facing; it reads MIFKR. A helical transmembrane segment spans residues 6-26; it reads FVNLLVFLFLLGAGLLTFFLI. Residues 27–116 lie on the Extracellular side of the membrane; sequence LSGGRESGTL…YYLSRVGWAM (90 aa). N73 carries N-linked (GlcNAc...) asparagine glycosylation. A helical transmembrane segment spans residues 117-137; that stretch reads LLISLFFIVLALVPGFLATFL. Residues 138–140 are Cytoplasmic-facing; sequence PFK. Residues 141 to 161 traverse the membrane as a helical segment; the sequence is AVPVLYCVLSWLAFFFIILAA. Residues 162–188 are Extracellular-facing; it reads CLYTGCYVKARKTFRNSGRSARLGPKN. The chain crosses the membrane as a helical span at residues 189 to 209; it reads FAFIWTSVFLMLVNAIWSTIF. At 210-309 the chain is on the cytoplasmic side; that stretch reads SATHKAHSTY…GLAGPVTVRD (100 aa). Phosphoserine occurs at positions 230 and 232. T235 is modified (phosphothreonine). Residues 253–309 are disordered; it reads GPITAAPVVGQPQPTTTTTPAGNGKFFQKLKTRKQVPSAELEPAGDGGLAGPVTVRD. The span at 258–274 shows a compositional bias: low complexity; sequence APVVGQPQPTTTTTPAG.

This sequence belongs to the SUR7 family.

The protein localises to the cell membrane. In terms of biological role, involved in sporulation and affects the sphingolipid composition of the plasma membrane. The protein is SUR7 family protein FMP45 (FMP45) of Saccharomyces cerevisiae (strain ATCC 204508 / S288c) (Baker's yeast).